Consider the following 465-residue polypeptide: Presenilin spe-4 (465 aa).

Residues 1–18 (MDTLRSISSELVRSSQLR) are Cytoplasmic-facing. The chain crosses the membrane as a helical span at residues 19–39 (WTLFSVIANMSLTLSIWIGVY). Residues 40 to 71 (NMEVNSELSKTYFLDPSFEQTTGNLLLDGFIN) lie on the Lumenal side of the membrane. A helical membrane pass occupies residues 72–92 (GVGTILVLGCVSFIMLAFVLF). Residues 93 to 96 (DFRR) are Cytoplasmic-facing. The chain crosses the membrane as a helical span at residues 97–117 (IVKAWLTLSCLLILFGVSAQT). Residues 118–136 (LHDMFSQVFDQDDNNQYYM) lie on the Lumenal side of the membrane. A helical transmembrane segment spans residues 137-157 (TIVLIVVPTVVYGFGGIYAFF). At 158-160 (SNS) the chain is on the cytoplasmic side. A helical membrane pass occupies residues 161–181 (SLILHQIFVVTNCSLISVFYL). At 182–190 (RVFPSKTTW) the chain is on the lumenal side. The chain crosses the membrane as a helical span at residues 191-211 (FVLWIVLFWDLFAVLAPMGPL). Asp-200 is an active-site residue. The Cytoplasmic portion of the chain corresponds to 212-389 (KKVQEKASDY…DALNDGEVLR (178 aa)). The disordered stretch occupies residues 287–356 (INPDSVPTEH…SDISTAEECD (70 aa)). Residues 326-350 (SETSSGSSNLSSSDSSTTVSTSDIS) show a composition bias toward low complexity. The chain crosses the membrane as a helical span at residues 390-410 (LGFGDFVFYSLLIGQAAASGC). Residue Asp-394 is part of the active site. Pro-411 is a topological domain (lumenal). A helical transmembrane segment spans residues 412–432 (FAVISAALGILFGLVVTLTVF). Residues 433–439 (STEESTT) lie on the Cytoplasmic side of the membrane. The PAL signature appears at 440–442 (PAL). Positions 440-460 (PALPLPVICGTFCYFSSMFFW) form an intramembrane region, helical. The Cytoplasmic segment spans residues 461 to 465 (EQLYG).

The protein belongs to the peptidase A22A family. As to quaternary structure, homodimer. Potential component of the gamma-secretase complex, a complex probably composed of the presenilin homodimer (sel-12, hop-1 or spe-4), nicastrin (aph-2), aph-1 and pen-2.

The protein localises to the endoplasmic reticulum membrane. Its subcellular location is the golgi apparatus. The protein resides in the cis-Golgi network membrane. Its function is as follows. Potential catalytic subunit of the gamma-secretase complex during spermatogenesis, an endoprotease complex that catalyzes the intramembrane cleavage of integral membrane proteins such as Notch receptors (lin-12 or glp-1). Involved in spermatid formation during meiosis II. May be required for proper localization of macromolecules that are subject to asymmetric partitioning during spermatogenesis. This is Presenilin spe-4 from Caenorhabditis elegans.